Consider the following 132-residue polypeptide: Large ribosomal subunit protein uL14 (132 aa).

Belongs to the universal ribosomal protein uL14 family. As to quaternary structure, part of the 50S ribosomal subunit. Forms a cluster with proteins L3 and L24e, part of which may contact the 16S rRNA in 2 intersubunit bridges.

Functionally, binds to 23S rRNA. Forms part of two intersubunit bridges in the 70S ribosome. The polypeptide is Large ribosomal subunit protein uL14 (Methanosarcina mazei (strain ATCC BAA-159 / DSM 3647 / Goe1 / Go1 / JCM 11833 / OCM 88) (Methanosarcina frisia)).